Consider the following 200-residue polypeptide: ATP-dependent Clp protease proteolytic subunit 3 (200 aa).

Residue S101 is the Nucleophile of the active site. H126 is a catalytic residue.

The protein belongs to the peptidase S14 family. As to quaternary structure, fourteen ClpP subunits assemble into 2 heptameric rings which stack back to back to give a disk-like structure with a central cavity, resembling the structure of eukaryotic proteasomes.

It is found in the cytoplasm. It carries out the reaction Hydrolysis of proteins to small peptides in the presence of ATP and magnesium. alpha-casein is the usual test substrate. In the absence of ATP, only oligopeptides shorter than five residues are hydrolyzed (such as succinyl-Leu-Tyr-|-NHMec, and Leu-Tyr-Leu-|-Tyr-Trp, in which cleavage of the -Tyr-|-Leu- and -Tyr-|-Trp bonds also occurs).. Cleaves peptides in various proteins in a process that requires ATP hydrolysis. Has a chymotrypsin-like activity. Plays a major role in the degradation of misfolded proteins. This is ATP-dependent Clp protease proteolytic subunit 3 from Synechococcus sp. (strain CC9902).